A 77-amino-acid chain; its full sequence is U10-lycotoxin-Ls1d (77 aa).

The first 20 residues, 1–20 (MKLIIFTGLFLFAIVSLIEA), serve as a signal peptide directing secretion. A propeptide spanning residues 21 to 26 (EEESGR) is cleaved from the precursor.

The protein belongs to the neurotoxin 19 (CSTX) family. 09 (U10-Lctx) subfamily. In terms of processing, contains 4 disulfide bonds. In terms of tissue distribution, expressed by the venom gland.

It is found in the secreted. The polypeptide is U10-lycotoxin-Ls1d (Lycosa singoriensis (Wolf spider)).